Here is a 352-residue protein sequence, read N- to C-terminus: Isopentenyl-diphosphate delta-isomerase (352 aa).

Substrate is bound at residue 6–7; the sequence is RK. FMN is bound by residues 63–65, serine 93, and asparagine 122; that span reads AMT. Residue 93–95 participates in substrate binding; the sequence is SQR. Glutamine 160 contributes to the substrate binding site. A Mg(2+)-binding site is contributed by glutamate 161. FMN-binding positions include lysine 192, threonine 221, 271–273, and 292–293; these read GIR and SQ.

Belongs to the IPP isomerase type 2 family. As to quaternary structure, homooctamer. Dimer of tetramers. It depends on FMN as a cofactor. The cofactor is NADPH. Mg(2+) serves as cofactor.

It is found in the cytoplasm. It carries out the reaction isopentenyl diphosphate = dimethylallyl diphosphate. Involved in the biosynthesis of isoprenoids. Catalyzes the 1,3-allylic rearrangement of the homoallylic substrate isopentenyl (IPP) to its allylic isomer, dimethylallyl diphosphate (DMAPP). The polypeptide is Isopentenyl-diphosphate delta-isomerase (Pyrobaculum arsenaticum (strain DSM 13514 / JCM 11321 / PZ6)).